The chain runs to 243 residues: MQITLPGVVLTNSPAEKQHVIVKIFSPAGLLSAFAKNGASLSCDFRESLFPISFSLFTIQQSPPKMRKVIQGELQNPFTTIKSSYPLLQSAGKMIQAILKTQWHEKPSPHLFSLFFNFLQRIPETQYPNFFSSMFLLKLLQHEGSLDLSRSCTLCKTSLESSTIYRYEGALFCEKHAHEETISFSQEEDHILRVIVQAKKFQELVCLAEFPIDIDTKIDALFSSFLSETSEPSSLYYKGKTLL.

The protein belongs to the RecO family.

Involved in DNA repair and RecF pathway recombination. The polypeptide is DNA repair protein RecO (Chlamydia trachomatis serovar L2 (strain ATCC VR-902B / DSM 19102 / 434/Bu)).